The chain runs to 176 residues: Large ribosomal subunit protein uL6 (176 aa).

The protein belongs to the universal ribosomal protein uL6 family. As to quaternary structure, part of the 50S ribosomal subunit.

Functionally, this protein binds to the 23S rRNA, and is important in its secondary structure. It is located near the subunit interface in the base of the L7/L12 stalk, and near the tRNA binding site of the peptidyltransferase center. The protein is Large ribosomal subunit protein uL6 of Lactobacillus gasseri (strain ATCC 33323 / DSM 20243 / BCRC 14619 / CIP 102991 / JCM 1131 / KCTC 3163 / NCIMB 11718 / NCTC 13722 / AM63).